We begin with the raw amino-acid sequence, 293 residues long: Acidic endochitinase SE2 (293 aa).

The N-terminal stretch at 1-25 is a signal peptide; that stretch reads MAAKIVSVLFLISLLIFASFESSHG. In terms of domain architecture, GH18 spans 26–293; the sequence is SQIVIYWGQN…GYSSAIKSSV (268 aa). 2 disulfide bridges follow: Cys-45–Cys-91 and Cys-75–Cys-81. The active-site Proton donor is Glu-151. Cys-183 and Cys-212 form a disulfide bridge.

Belongs to the glycosyl hydrolase 18 family. Chitinase class II subfamily. In terms of tissue distribution, accumulates in leaves during infection.

Its subcellular location is the secreted. The protein localises to the extracellular space. It carries out the reaction Random endo-hydrolysis of N-acetyl-beta-D-glucosaminide (1-&gt;4)-beta-linkages in chitin and chitodextrins.. Functionally, this protein functions as a defense against chitin containing fungal pathogens. This endochitinase also exhibits exochitinase activity, i.e. it is capable of hydrolyzing chito-oligosaccharides, including chitobiose. This chain is Acidic endochitinase SE2 (SE2), found in Beta vulgaris (Sugar beet).